We begin with the raw amino-acid sequence, 199 residues long: ATP-dependent Clp protease proteolytic subunit (199 aa).

S97 serves as the catalytic Nucleophile. Residue H122 is part of the active site.

Belongs to the peptidase S14 family. As to quaternary structure, fourteen ClpP subunits assemble into 2 heptameric rings which stack back to back to give a disk-like structure with a central cavity, resembling the structure of eukaryotic proteasomes.

It is found in the cytoplasm. It catalyses the reaction Hydrolysis of proteins to small peptides in the presence of ATP and magnesium. alpha-casein is the usual test substrate. In the absence of ATP, only oligopeptides shorter than five residues are hydrolyzed (such as succinyl-Leu-Tyr-|-NHMec, and Leu-Tyr-Leu-|-Tyr-Trp, in which cleavage of the -Tyr-|-Leu- and -Tyr-|-Trp bonds also occurs).. Functionally, cleaves peptides in various proteins in a process that requires ATP hydrolysis. Has a chymotrypsin-like activity. Plays a major role in the degradation of misfolded proteins. The chain is ATP-dependent Clp protease proteolytic subunit from Geotalea uraniireducens (strain Rf4) (Geobacter uraniireducens).